Consider the following 360-residue polypeptide: NAD(P)H-quinone oxidoreductase subunit 1, chloroplastic (360 aa).

8 helical membrane passes run tryptophan 29–valine 49, isoleucine 96–valine 116, isoleucine 128–methionine 148, alanine 166–leucine 186, isoleucine 204–leucine 224, glycine 255–leucine 277, isoleucine 297–leucine 317, and leucine 333–alanine 353.

It belongs to the complex I subunit 1 family. As to quaternary structure, NDH is composed of at least 16 different subunits, 5 of which are encoded in the nucleus.

Its subcellular location is the plastid. The protein localises to the chloroplast thylakoid membrane. The enzyme catalyses a plastoquinone + NADH + (n+1) H(+)(in) = a plastoquinol + NAD(+) + n H(+)(out). It carries out the reaction a plastoquinone + NADPH + (n+1) H(+)(in) = a plastoquinol + NADP(+) + n H(+)(out). Functionally, NDH shuttles electrons from NAD(P)H:plastoquinone, via FMN and iron-sulfur (Fe-S) centers, to quinones in the photosynthetic chain and possibly in a chloroplast respiratory chain. The immediate electron acceptor for the enzyme in this species is believed to be plastoquinone. Couples the redox reaction to proton translocation, and thus conserves the redox energy in a proton gradient. This Chlorokybus atmophyticus (Soil alga) protein is NAD(P)H-quinone oxidoreductase subunit 1, chloroplastic.